We begin with the raw amino-acid sequence, 268 residues long: MPVVSLAELLESGVHFGHQTRRWNPKMSPYIYTARNGVHIIDLVQTAQLMENAYEYVRKSSEQGKRFLFIGTKRQAAGIIAQEASRCGANYVNQRWLGGMLTNWETIKGRVERLKELESMEENGAISRRPKKEAAVLRRELGKLDKYLGGIKTMRKLPDVVVIVDQRREYNAISECQKLGIPIISMLDTNCDPDFADIPIPANDDAIRSIKLILGKLADAIYEGRHGQLDSEQDYEDFDESISDEYDDYEDEEEYEEQDLEVDASEDE.

The disordered stretch occupies residues 228-268; that stretch reads QLDSEQDYEDFDESISDEYDDYEDEEEYEEQDLEVDASEDE. Over residues 231–268 the composition is skewed to acidic residues; sequence SEQDYEDFDESISDEYDDYEDEEEYEEQDLEVDASEDE.

It belongs to the universal ribosomal protein uS2 family.

This Rippkaea orientalis (strain PCC 8801 / RF-1) (Cyanothece sp. (strain PCC 8801)) protein is Small ribosomal subunit protein uS2.